Reading from the N-terminus, the 207-residue chain is MATVLMINASDRLEQGVSVKMYNQFLNSYKEAHPNDTVEELNLFAEKLPYYGNTAITGQYKKAQGVELTGEEKEIVETIERYQEQFLNADKVVFAFPLWNFTVPAPLITYLSYLAQAGKTFRYTETGPVGLVGSKEVALLNARGGVYSNEEMAALEMAANLVRTTMAFWGITQPVEVIIEGHNAAPDQADAIISEGLENVKKAAVAF.

Serine 10 lines the FMN pocket.

The protein belongs to the azoreductase type 1 family. In terms of assembly, homodimer. Requires FMN as cofactor.

The enzyme catalyses 2 a quinone + NADH + H(+) = 2 a 1,4-benzosemiquinone + NAD(+). It catalyses the reaction N,N-dimethyl-1,4-phenylenediamine + anthranilate + 2 NAD(+) = 2-(4-dimethylaminophenyl)diazenylbenzoate + 2 NADH + 2 H(+). In terms of biological role, quinone reductase that provides resistance to thiol-specific stress caused by electrophilic quinones. Also exhibits azoreductase activity. Catalyzes the reductive cleavage of the azo bond in aromatic azo compounds to the corresponding amines. The protein is FMN-dependent NADH:quinone oxidoreductase of Shouchella clausii (strain KSM-K16) (Alkalihalobacillus clausii).